A 203-amino-acid chain; its full sequence is MGEEVQIGATAVGIKAKDGVVLAAEKRVSYGFYTLSSAGKKVFVIDDKLAIASAGIIADMQTLAKILKLNAKAYELEMKRKPSTHSMARLLSVIMFSRRFMPFFAEVLVGGIDEEGPHLIVMDPLGSLIEDNYAALGTGAKLAVAVLDTGYRPDITVEEAKKLAVQALKAAIERDPVSGGGIDLAIVDKNGAREEEVRVQLLI.

Residues 1 to 9 (MGEEVQIGA) constitute a propeptide, removed in mature form; by autocatalysis. Catalysis depends on Thr10, which acts as the Nucleophile.

The protein belongs to the peptidase T1B family. In terms of assembly, the 20S proteasome core is composed of 14 alpha and 14 beta subunits that assemble into four stacked heptameric rings, resulting in a barrel-shaped structure. The two inner rings, each composed of seven catalytic beta subunits, are sandwiched by two outer rings, each composed of seven alpha subunits. The catalytic chamber with the active sites is on the inside of the barrel. Has a gated structure, the ends of the cylinder being occluded by the N-termini of the alpha-subunits. Is capped at one or both ends by the proteasome regulatory ATPase, PAN.

The protein resides in the cytoplasm. The catalysed reaction is Cleavage of peptide bonds with very broad specificity.. With respect to regulation, the formation of the proteasomal ATPase PAN-20S proteasome complex, via the docking of the C-termini of PAN into the intersubunit pockets in the alpha-rings, triggers opening of the gate for substrate entry. Interconversion between the open-gate and close-gate conformations leads to a dynamic regulation of the 20S proteasome proteolysis activity. Component of the proteasome core, a large protease complex with broad specificity involved in protein degradation. In Pyrobaculum aerophilum (strain ATCC 51768 / DSM 7523 / JCM 9630 / CIP 104966 / NBRC 100827 / IM2), this protein is Proteasome subunit beta 2.